Consider the following 330-residue polypeptide: MINFSSFYQQIADSNLQHWLETLPAILGKWQREHKHGNLPKWEKVLNKLHYPSPDSVDLVDSVTIGTGEQLTPGEKEKLENLLRLFMPWRKGPFHIHGIHIDTEWRSDWKWDRVKPHISPLQNRTVLDVGCGSGYHMWRMLGAGAKRVVGIDPSPLFLCQFEAVKRLSGENHPVHLLPLGIEELPPLDAFDTVFSMGVLYHRRSPIDHLLQLRDQLRMGGELVLETLVIDGDENAVLVPQDRYGKMNNVWFIPSVAALMLWLKKCDFTDIRCVDTDVTALAEQRRTDWMPNESLVEYLDPKDITKTVEGYPAPKRATIIAVKNQPNQDLS.

Carboxy-S-adenosyl-L-methionine is bound by residues Lys91, Trp105, Lys110, Gly130, 152 to 154 (DPS), 181 to 182 (IE), Met196, Tyr200, and Arg315.

It belongs to the class I-like SAM-binding methyltransferase superfamily. CmoB family. Homotetramer.

It carries out the reaction carboxy-S-adenosyl-L-methionine + 5-hydroxyuridine(34) in tRNA = 5-carboxymethoxyuridine(34) in tRNA + S-adenosyl-L-homocysteine + H(+). Its function is as follows. Catalyzes carboxymethyl transfer from carboxy-S-adenosyl-L-methionine (Cx-SAM) to 5-hydroxyuridine (ho5U) to form 5-carboxymethoxyuridine (cmo5U) at position 34 in tRNAs. The polypeptide is tRNA U34 carboxymethyltransferase (Shewanella oneidensis (strain ATCC 700550 / JCM 31522 / CIP 106686 / LMG 19005 / NCIMB 14063 / MR-1)).